The primary structure comprises 510 residues: 3,4-dihydroxyphenylacetaldehyde synthase (510 aa).

Asparagine 192 is a catalytic residue. Lysine 303 is modified (N6-(pyridoxal phosphate)lysine).

This sequence belongs to the group II decarboxylase family. Pyridoxal 5'-phosphate serves as cofactor.

The enzyme catalyses L-dopa + O2 + H2O + H(+) = 3,4-dihydroxyphenylacetaldehyde + H2O2 + NH4(+) + CO2. Functionally, catalyzes the decarboxylation-oxidative deamination of L-3,4-dihydroxyphenylalanine (L-DOPA) to 3,4-dihydroxylphenylacetaldehyde (DHPAA). Involved in cuticle development. Probably responsible for the protein cross-linking during the development of flexible cuticles. In Drosophila melanogaster (Fruit fly), this protein is 3,4-dihydroxyphenylacetaldehyde synthase (amd).